Consider the following 579-residue polypeptide: Sulfite reductase [NADPH] hemoprotein beta-component (579 aa).

[4Fe-4S] cluster contacts are provided by C434, C440, C479, and C483. C483 lines the siroheme pocket.

This sequence belongs to the nitrite and sulfite reductase 4Fe-4S domain family. As to quaternary structure, alpha(8)-beta(8). The alpha component is a flavoprotein, the beta component is a hemoprotein. Requires siroheme as cofactor. The cofactor is [4Fe-4S] cluster.

The enzyme catalyses hydrogen sulfide + 3 NADP(+) + 3 H2O = sulfite + 3 NADPH + 4 H(+). Its pathway is sulfur metabolism; hydrogen sulfide biosynthesis; hydrogen sulfide from sulfite (NADPH route): step 1/1. Functionally, component of the sulfite reductase complex that catalyzes the 6-electron reduction of sulfite to sulfide. This is one of several activities required for the biosynthesis of L-cysteine from sulfate. This is Sulfite reductase [NADPH] hemoprotein beta-component from Salmonella choleraesuis (strain SC-B67).